Consider the following 360-residue polypeptide: Aminomethyltransferase (360 aa).

Belongs to the GcvT family. The glycine cleavage system is composed of four proteins: P, T, L and H.

It carries out the reaction N(6)-[(R)-S(8)-aminomethyldihydrolipoyl]-L-lysyl-[protein] + (6S)-5,6,7,8-tetrahydrofolate = N(6)-[(R)-dihydrolipoyl]-L-lysyl-[protein] + (6R)-5,10-methylene-5,6,7,8-tetrahydrofolate + NH4(+). Functionally, the glycine cleavage system catalyzes the degradation of glycine. The sequence is that of Aminomethyltransferase from Exiguobacterium sibiricum (strain DSM 17290 / CCUG 55495 / CIP 109462 / JCM 13490 / 255-15).